The primary structure comprises 525 residues: Patatin-like protein 8 (525 aa).

The disordered stretch occupies residues 1–50; the sequence is MNRRYEKPPPLSVSSKGKKKHFVNHTAPNTPGNYERTQTSPTLSTARSHE. Polar residues predominate over residues 26-46; the sequence is TAPNTPGNYERTQTSPTLSTA. In terms of domain architecture, PNPLA spans 124-338; it reads LSIDGGGMRG…AMSNPTAAAI (215 aa). The short motif at 128-133 is the GXGXXG element; the sequence is GGGMRG. Residue Ser-168 is the Nucleophile of the active site.

The protein belongs to the patatin family. In terms of tissue distribution, specifically expressed in roots.

Functionally, possesses non-specific lipolytic acyl hydrolase (LAH) activity. Hydrolyzes phospholipids as well as galactolipids. May play a role in disease resistance. The sequence is that of Patatin-like protein 8 (PLP8) from Arabidopsis thaliana (Mouse-ear cress).